A 461-amino-acid chain; its full sequence is Cysteine--tRNA ligase (461 aa).

Cys30 is a binding site for Zn(2+). The 'HIGH' region signature appears at 32–42 (VTIYDLCHIGH). Residues Cys211, His236, and Glu240 each contribute to the Zn(2+) site. The 'KMSKS' region motif lies at 268–272 (KMSKS). Position 271 (Lys271) interacts with ATP.

It belongs to the class-I aminoacyl-tRNA synthetase family. Monomer. Zn(2+) serves as cofactor.

It localises to the cytoplasm. It carries out the reaction tRNA(Cys) + L-cysteine + ATP = L-cysteinyl-tRNA(Cys) + AMP + diphosphate. This Shewanella sp. (strain W3-18-1) protein is Cysteine--tRNA ligase.